Reading from the N-terminus, the 324-residue chain is Acetyl-coenzyme A carboxylase carboxyl transferase subunit alpha (324 aa).

One can recognise a CoA carboxyltransferase C-terminal domain in the interval 37-291 (ILEDKLENLE…DLMIRKTFEQ (255 aa)).

It belongs to the AccA family. In terms of assembly, acetyl-CoA carboxylase is a heterohexamer composed of biotin carboxyl carrier protein (AccB), biotin carboxylase (AccC) and two subunits each of ACCase subunit alpha (AccA) and ACCase subunit beta (AccD).

The protein resides in the cytoplasm. It carries out the reaction N(6)-carboxybiotinyl-L-lysyl-[protein] + acetyl-CoA = N(6)-biotinyl-L-lysyl-[protein] + malonyl-CoA. Its pathway is lipid metabolism; malonyl-CoA biosynthesis; malonyl-CoA from acetyl-CoA: step 1/1. Functionally, component of the acetyl coenzyme A carboxylase (ACC) complex. First, biotin carboxylase catalyzes the carboxylation of biotin on its carrier protein (BCCP) and then the CO(2) group is transferred by the carboxyltransferase to acetyl-CoA to form malonyl-CoA. The chain is Acetyl-coenzyme A carboxylase carboxyl transferase subunit alpha from Bacillus cereus (strain G9842).